The sequence spans 247 residues: 2,3-bisphosphoglycerate-dependent phosphoglycerate mutase (247 aa).

Residues 8–15 (RHGESQWN), 21–22 (TG), R60, 87–90 (ERHY), K98, 114–115 (RR), and 183–184 (GN) each bind substrate. H9 serves as the catalytic Tele-phosphohistidine intermediate. Catalysis depends on E87, which acts as the Proton donor/acceptor.

Belongs to the phosphoglycerate mutase family. BPG-dependent PGAM subfamily.

It carries out the reaction (2R)-2-phosphoglycerate = (2R)-3-phosphoglycerate. Its pathway is carbohydrate degradation; glycolysis; pyruvate from D-glyceraldehyde 3-phosphate: step 3/5. Functionally, catalyzes the interconversion of 2-phosphoglycerate and 3-phosphoglycerate. The chain is 2,3-bisphosphoglycerate-dependent phosphoglycerate mutase from Chlorobium phaeobacteroides (strain BS1).